The chain runs to 496 residues: Glycerol kinase (496 aa).

Residue threonine 12 participates in ADP binding. ATP-binding residues include threonine 12, threonine 13, and serine 14. Position 12 (threonine 12) interacts with sn-glycerol 3-phosphate. Residue arginine 16 coordinates ADP. The sn-glycerol 3-phosphate site is built by arginine 82, glutamate 83, and tyrosine 134. The glycerol site is built by arginine 82, glutamate 83, and tyrosine 134. Histidine 230 carries the post-translational modification Phosphohistidine; by HPr. Aspartate 244 contributes to the sn-glycerol 3-phosphate binding site. Glycerol is bound by residues aspartate 244 and glutamine 245. 2 residues coordinate ADP: threonine 266 and glycine 309. ATP-binding residues include threonine 266, glycine 309, glutamine 313, and glycine 410. 2 residues coordinate ADP: glycine 410 and asparagine 414.

This sequence belongs to the FGGY kinase family. In terms of assembly, homotetramer and homodimer (in equilibrium). The phosphoenolpyruvate-dependent sugar phosphotransferase system (PTS), including enzyme I, and histidine-containing protein (HPr) are required for the phosphorylation, which leads to the activation of the enzyme.

It carries out the reaction glycerol + ATP = sn-glycerol 3-phosphate + ADP + H(+). The protein operates within polyol metabolism; glycerol degradation via glycerol kinase pathway; sn-glycerol 3-phosphate from glycerol: step 1/1. Its activity is regulated as follows. Activated by phosphorylation and inhibited by fructose 1,6-bisphosphate (FBP). Its function is as follows. Key enzyme in the regulation of glycerol uptake and metabolism. Catalyzes the phosphorylation of glycerol to yield sn-glycerol 3-phosphate. The polypeptide is Glycerol kinase (Bacillus subtilis (strain 168)).